Consider the following 363-residue polypeptide: Ankyrin repeat domain-containing protein 40 (363 aa).

Met-1 carries the post-translational modification N-acetylmethionine. ANK repeat units lie at residues Glu-9–Ser-38 and Asn-43–Ile-72. Residues Asp-135–Leu-167 are disordered. The span at Pro-144–Glu-164 shows a compositional bias: pro residues. Ser-176 bears the Phosphoserine mark.

The chain is Ankyrin repeat domain-containing protein 40 (Ankrd40) from Mus musculus (Mouse).